The chain runs to 526 residues: Cytochrome P450 monooxygenase patI (526 aa).

The Cytoplasmic segment spans residues 1–6 (MDILQL). The chain crosses the membrane as a helical span at residues 7–29 (APTHLLAILLSSTSALFLITYLL). Over 30–526 (RAGHRPSDLP…EAQEVFARFD (497 aa)) the chain is Lumenal. Asn81 carries an N-linked (GlcNAc...) asparagine glycan. Cys446 provides a ligand contact to heme.

The protein belongs to the cytochrome P450 family. Requires heme as cofactor.

The protein resides in the endoplasmic reticulum membrane. It catalyses the reaction 3-hydroxybenzyl alcohol + reduced [NADPH--hemoprotein reductase] + O2 = gentisyl alcohol + oxidized [NADPH--hemoprotein reductase] + H2O + H(+). It participates in mycotoxin biosynthesis; patulin biosynthesis. Its function is as follows. Cytochrome P450 monooxygenase; part of the gene cluster that mediates the biosynthesis of patulin, an acetate-derived tetraketide mycotoxin produced by several fungal species that shows antimicrobial properties against several bacteria. PatI catalyzes the conversion of m-hydroxybenzyl alcohol into gentisyl alcohol. The pathway begins with the synthesis of 6-methylsalicylic acid by the polyketide synthase (PKS) patK via condensation of acetate and malonate units. The 6-methylsalicylic acid decarboxylase patG then catalyzes the decarboxylation of 6-methylsalicylic acid to yield m-cresol (also known as 3-methylphenol). These first reactions occur in the cytosol. The intermediate m-cresol is then transported into the endoplasmic reticulum where the cytochrome P450 monooxygenase patH converts it to m-hydroxybenzyl alcohol, which is further converted to gentisyl alcohol by the cytochrome P450 monooxygenase patI. The oxidoreductases patJ and patO further convert gentisyl alcohol to isoepoxydon in the vacuole. PatN catalyzes then the transformation of isoepoxydon into phyllostine. The cluster protein patF is responsible for the conversion from phyllostine to neopatulin whereas the alcohol dehydrogenase patD converts neopatulin to E-ascladiol. The steps between isoepoxydon and E-ascladiol occur in the cytosol, and E-ascladiol is probably secreted to the extracellular space by one of the cluster-specific transporters patC or patM. Finally, the secreted patulin synthase patE catalyzes the conversion of E-ascladiol to patulin. The sequence is that of Cytochrome P450 monooxygenase patI from Penicillium expansum (Blue mold rot fungus).